The primary structure comprises 483 residues: Aspartyl/glutamyl-tRNA(Asn/Gln) amidotransferase subunit B (483 aa).

It belongs to the GatB/GatE family. GatB subfamily. In terms of assembly, heterotrimer of A, B and C subunits.

The enzyme catalyses L-glutamyl-tRNA(Gln) + L-glutamine + ATP + H2O = L-glutaminyl-tRNA(Gln) + L-glutamate + ADP + phosphate + H(+). It catalyses the reaction L-aspartyl-tRNA(Asn) + L-glutamine + ATP + H2O = L-asparaginyl-tRNA(Asn) + L-glutamate + ADP + phosphate + 2 H(+). In terms of biological role, allows the formation of correctly charged Asn-tRNA(Asn) or Gln-tRNA(Gln) through the transamidation of misacylated Asp-tRNA(Asn) or Glu-tRNA(Gln) in organisms which lack either or both of asparaginyl-tRNA or glutaminyl-tRNA synthetases. The reaction takes place in the presence of glutamine and ATP through an activated phospho-Asp-tRNA(Asn) or phospho-Glu-tRNA(Gln). This chain is Aspartyl/glutamyl-tRNA(Asn/Gln) amidotransferase subunit B, found in Rickettsia africae (strain ESF-5).